A 1044-amino-acid polypeptide reads, in one-letter code: Translation initiation factor IF-2 (1044 aa).

The interval 31–425 (VRSASSTVEP…RKSKRAKRQE (395 aa)) is disordered. Pro residues-rich tracts occupy residues 77-98 (GPAP…PQPA) and 106-116 (APAPAPAPRPA). Residues 117-148 (EPAANPAPAAPPAFQAPAPAPAERPAAAQRPA) show a composition bias toward low complexity. Residues 168–185 (GGPGQGPRPGARPGGPGA) are compositionally biased toward gly residues. Residues 204-247 (GPGDRPERSERPDRGDRPQGDRPRSDRPQGERQQGDRPQGDRPG) are compositionally biased toward basic and acidic residues. Residues 285–304 (GGAPRPGNNPFASNQGMPRP) are compositionally biased toward low complexity. Pro residues predominate over residues 305-328 (QGGPRPTPAGPGGPRPGGPRPNPG). Residues 329–338 (MMPARPTVGR) show a composition bias toward low complexity. Residues 339 to 409 (PGAGPGAGRP…GTQGAFGRAG (71 aa)) show a composition bias toward gly residues. Residues 413-422 (VRGRKSKRAK) are compositionally biased toward basic residues. Positions 537 to 709 (ARPPVVTVMG…VLLTADASLD (173 aa)) constitute a tr-type G domain. Residues 546-553 (GHVDHGKT) are G1. 546 to 553 (GHVDHGKT) serves as a coordination point for GTP. The interval 571 to 575 (GITQH) is G2. Residues 596 to 599 (DTPG) are G3. Residues 596–600 (DTPGH) and 650–653 (NKVD) contribute to the GTP site. The segment at 650–653 (NKVD) is G4. Positions 686–688 (SAR) are G5.

Belongs to the TRAFAC class translation factor GTPase superfamily. Classic translation factor GTPase family. IF-2 subfamily.

It is found in the cytoplasm. One of the essential components for the initiation of protein synthesis. Protects formylmethionyl-tRNA from spontaneous hydrolysis and promotes its binding to the 30S ribosomal subunits. Also involved in the hydrolysis of GTP during the formation of the 70S ribosomal complex. The sequence is that of Translation initiation factor IF-2 from Kineococcus radiotolerans (strain ATCC BAA-149 / DSM 14245 / SRS30216).